A 279-amino-acid polypeptide reads, in one-letter code: Proteasome subunit beta 2 (279 aa).

A propeptide spans 1–53 (MAAAFDPSGRFPDLFTSVGTSSFSAFLSKAAPELLPGRRPLPPGMATGLTPHA) (removed in mature form; by autocatalysis). Threonine 54 acts as the Nucleophile in catalysis.

Belongs to the peptidase T1B family. As to quaternary structure, the 20S proteasome core is composed of 14 alpha and 14 beta subunits that assemble into four stacked heptameric rings, resulting in a barrel-shaped structure. The two inner rings, each composed of seven catalytic beta subunits, are sandwiched by two outer rings, each composed of seven alpha subunits. The catalytic chamber with the active sites is on the inside of the barrel. Has a gated structure, the ends of the cylinder being occluded by the N-termini of the alpha-subunits. Is capped by the proteasome-associated ATPase, ARC.

It is found in the cytoplasm. The enzyme catalyses Cleavage of peptide bonds with very broad specificity.. It functions in the pathway protein degradation; proteasomal Pup-dependent pathway. With respect to regulation, the formation of the proteasomal ATPase ARC-20S proteasome complex, likely via the docking of the C-termini of ARC into the intersubunit pockets in the alpha-rings, may trigger opening of the gate for substrate entry. Interconversion between the open-gate and close-gate conformations leads to a dynamic regulation of the 20S proteasome proteolysis activity. Component of the proteasome core, a large protease complex with broad specificity involved in protein degradation. This Salinispora tropica (strain ATCC BAA-916 / DSM 44818 / JCM 13857 / NBRC 105044 / CNB-440) protein is Proteasome subunit beta 2.